The sequence spans 69 residues: Small, acid-soluble spore protein I (69 aa).

Belongs to the SspI family.

It localises to the spore core. This is Small, acid-soluble spore protein I from Shouchella clausii (strain KSM-K16) (Alkalihalobacillus clausii).